Consider the following 141-residue polypeptide: DUF35 domain-containing scaffold protein (141 aa).

Zn(2+) is bound by residues C30, C33, C44, and C47.

This sequence belongs to the scaffold protein DUF35 family. In terms of assembly, interacts with acetoacetyl-CoA thiolase and HMG-CoA synthase (HMGCS) that catalyzes the first and second step in the mevalonate pathway, respectively.

Functionally, functions as a scaffold to connect the acetoacetyl-CoA thiolase and HMG-CoA synthase (HMGCS) dimers in the channeling thiolase/HMGCS complex, which allows for efficient coupling of the endergonic thiolase reaction with the exergonic HMGCS reaction. In Methanocaldococcus jannaschii (strain ATCC 43067 / DSM 2661 / JAL-1 / JCM 10045 / NBRC 100440) (Methanococcus jannaschii), this protein is DUF35 domain-containing scaffold protein.